We begin with the raw amino-acid sequence, 326 residues long: MEKSITNSPVLSILSYCAASILMTVTNKYVLSGTSFNLNLALLAVQSIVCLTAISIGKSFGLCKFRSFNADEAKKWFPIALLLVVMIYTSSKALQFLSIPVYTIFKNLTIILIAYGEVLWFGGSVTSMALASFVLMVLSSVIAAWSDISGAIAVSGSATTTVTALNIGYFWMMSNCFASAAFVLYMRKRIKLTNFGDFDTTFYNNLLSIPVLLIASLLFEDWSPANLAVNFPPESRNLIFFSMVVSGLMSIGISYCSAWCVRVTSSTTYSMVGALNKLPLALSGIVFFGTPATFSSVSAIFVGFVAGIVYAVAQIQKKKAEAALPK.

Topologically, residues 1–4 (MEKS) are cytoplasmic. The chain crosses the membrane as a helical span at residues 5 to 25 (ITNSPVLSILSYCAASILMTV). Residues 26–35 (TNKYVLSGTS) lie on the Lumenal side of the membrane. The helical transmembrane segment at 36-56 (FNLNLALLAVQSIVCLTAISI) threads the bilayer. Topologically, residues 57-74 (GKSFGLCKFRSFNADEAK) are cytoplasmic. The chain crosses the membrane as a helical span at residues 75–97 (KWFPIALLLVVMIYTSSKALQFL). The Lumenal portion of the chain corresponds to 98-100 (SIP). Residues 101 to 123 (VYTIFKNLTIILIAYGEVLWFGG) traverse the membrane as a helical segment. Residues 124–129 (SVTSMA) are Cytoplasmic-facing. Residues 130–152 (LASFVLMVLSSVIAAWSDISGAI) traverse the membrane as a helical segment. Residues 153–163 (AVSGSATTTVT) are Lumenal-facing. The helical transmembrane segment at 164-184 (ALNIGYFWMMSNCFASAAFVL) threads the bilayer. The Cytoplasmic portion of the chain corresponds to 185–208 (YMRKRIKLTNFGDFDTTFYNNLLS). A helical membrane pass occupies residues 209 to 229 (IPVLLIASLLFEDWSPANLAV). Over 230–237 (NFPPESRN) the chain is Lumenal. The helical transmembrane segment at 238–258 (LIFFSMVVSGLMSIGISYCSA) threads the bilayer. Residues 259–268 (WCVRVTSSTT) are Cytoplasmic-facing. The helical transmembrane segment at 269–289 (YSMVGALNKLPLALSGIVFFG) threads the bilayer. Over 290–291 (TP) the chain is Lumenal. A helical transmembrane segment spans residues 292–312 (ATFSSVSAIFVGFVAGIVYAV). Topologically, residues 313–326 (AQIQKKKAEAALPK) are cytoplasmic.

This sequence belongs to the TPT transporter family. SLC35D subfamily. In terms of assembly, homooligomer.

The protein resides in the golgi apparatus membrane. Its subcellular location is the cytoplasmic vesicle membrane. It localises to the endoplasmic reticulum membrane. Involved in the import of GDP-mannose from the cytoplasm into the Golgi lumen. The sequence is that of GDP-mannose transporter (VRG4) from Yarrowia lipolytica (strain CLIB 122 / E 150) (Yeast).